The following is a 262-amino-acid chain: Acyl-[acyl-carrier-protein]--UDP-N-acetylglucosamine O-acyltransferase (262 aa).

It belongs to the transferase hexapeptide repeat family. LpxA subfamily. Homotrimer.

It localises to the cytoplasm. The catalysed reaction is a (3R)-hydroxyacyl-[ACP] + UDP-N-acetyl-alpha-D-glucosamine = a UDP-3-O-[(3R)-3-hydroxyacyl]-N-acetyl-alpha-D-glucosamine + holo-[ACP]. It participates in glycolipid biosynthesis; lipid IV(A) biosynthesis; lipid IV(A) from (3R)-3-hydroxytetradecanoyl-[acyl-carrier-protein] and UDP-N-acetyl-alpha-D-glucosamine: step 1/6. Its function is as follows. Involved in the biosynthesis of lipid A, a phosphorylated glycolipid that anchors the lipopolysaccharide to the outer membrane of the cell. This chain is Acyl-[acyl-carrier-protein]--UDP-N-acetylglucosamine O-acyltransferase, found in Paracidovorax citrulli (strain AAC00-1) (Acidovorax citrulli).